Consider the following 325-residue polypeptide: Probable siderophore-binding lipoprotein YfiY (325 aa).

The first 20 residues, 1-20, serve as a signal peptide directing secretion; sequence MKKHISMLFVFLMAVMVLSA. Cysteine 21 carries the N-palmitoyl cysteine lipid modification. A lipid anchor (S-diacylglycerol cysteine) is attached at cysteine 21. One can recognise a Fe/B12 periplasmic-binding domain in the interval 56-325; the sequence is RIVVLTNEGT…DIETYFLKTK (270 aa). A Phosphoserine modification is found at serine 290. Threonine 302 carries the post-translational modification Phosphothreonine.

Belongs to the bacterial solute-binding protein 8 family. The complex is composed of one ATP-binding protein (YusV), two transmembrane proteins (YfiZ and YfhA) and a solute-binding protein (YfiY). Interacts with FloT.

It is found in the cell membrane. It localises to the cytoplasm. Its subcellular location is the membrane raft. In terms of biological role, part of the ABC transporter complex YfiYZ/YfhA/YusV involved in import of the iron-hydroxamate siderophores schizokinen, arthrobactin and corprogen. Binds the siderophores and delivers them to the surface of YfiZ/YfhA. The polypeptide is Probable siderophore-binding lipoprotein YfiY (yfiY) (Bacillus subtilis (strain 168)).